The sequence spans 315 residues: Acetyl-coenzyme A carboxylase carboxyl transferase subunit alpha (315 aa).

In terms of domain architecture, CoA carboxyltransferase C-terminal spans 36-289; it reads LGKKRLELME…RKAVAAELKV (254 aa).

It belongs to the AccA family. As to quaternary structure, acetyl-CoA carboxylase is a heterohexamer composed of biotin carboxyl carrier protein (AccB), biotin carboxylase (AccC) and two subunits each of ACCase subunit alpha (AccA) and ACCase subunit beta (AccD).

It is found in the cytoplasm. It carries out the reaction N(6)-carboxybiotinyl-L-lysyl-[protein] + acetyl-CoA = N(6)-biotinyl-L-lysyl-[protein] + malonyl-CoA. It functions in the pathway lipid metabolism; malonyl-CoA biosynthesis; malonyl-CoA from acetyl-CoA: step 1/1. In terms of biological role, component of the acetyl coenzyme A carboxylase (ACC) complex. First, biotin carboxylase catalyzes the carboxylation of biotin on its carrier protein (BCCP) and then the CO(2) group is transferred by the carboxyltransferase to acetyl-CoA to form malonyl-CoA. This chain is Acetyl-coenzyme A carboxylase carboxyl transferase subunit alpha, found in Francisella philomiragia subsp. philomiragia (strain ATCC 25017 / CCUG 19701 / FSC 153 / O#319-036).